The sequence spans 396 residues: Protein ANTAGONIST OF LIKE HETEROCHROMATIN PROTEIN 1 (396 aa).

2 stretches are compositionally biased toward basic residues: residues 1–12 and 20–29; these read MAPVKQKKKNKK and KLAKNKEKKR. The interval 1-29 is disordered; sequence MAPVKQKKKNKKKPLDKAKKLAKNKEKKR. The Nuclear localization signal motif lies at 6 to 13; it reads QKKKNKKK. The region spanning 183-348 is the DDE Tnp4 domain; the sequence is IDTTHIIMTL…IILVCCLLHN (166 aa).

Belongs to the HARBI1 family. In terms of assembly, interacts with core components of POLYCOMB REPRESSIVE COMPLEX 2 (PRC2), a PcG protein complex with H3K27me3 histone methyltransferase activity. Associates with plant-specific PRC2 accessory components such as MSI1, EMF2, VRN2, FIE and CLF. A divalent metal cation serves as cofactor. Expressed in roots, inflorescence stems, seedlings, leaves, flower buds, inflorescences, and siliques.

Its subcellular location is the nucleus. Functionally, transposase-derived protein that may have nuclease activity. Antagonist of polycomb-group (PcG) protein-mediated chromatin silencing, probably by preventing the association of POLYCOMB REPRESSIVE COMPLEX 2 (PRC2) with its accessory components. Needed for full reactivation of several floral homeotic genes that are repressed by PcG. This chain is Protein ANTAGONIST OF LIKE HETEROCHROMATIN PROTEIN 1, found in Arabidopsis thaliana (Mouse-ear cress).